We begin with the raw amino-acid sequence, 82 residues long: Myosin light chain alkali (82 aa).

The EF-hand domain occupies 7 to 42; it reads GCYGDFIECLKLYDKEENGTMMLAELQHALLALGES.

In terms of assembly, myosin is a hexamer of 2 heavy chains and 4 light chains.

The sequence is that of Myosin light chain alkali (Mlc1) from Drosophila sechellia (Fruit fly).